The following is a 662-amino-acid chain: ABC transporter G family member 25 (662 aa).

The segment at 1–30 is disordered; sequence MSAFDGVENQMNGPDSSPRLSQDPREPRSL. Residues 9–20 show a composition bias toward polar residues; it reads NQMNGPDSSPRL. N-linked (GlcNAc...) asparagine glycosylation occurs at Asn56. In terms of domain architecture, ABC transporter spans 69-308; it reads QKPSDETRST…FESVGFSPAF (240 aa). Residue 101–108 participates in ATP binding; the sequence is GPSGSGKS. N-linked (GlcNAc...) asparagine glycosylation occurs at Asn122. A run of 7 helical transmembrane segments spans residues 374–394, 406–426, 437–457, 489–509, 522–542, 547–567, and 629–649; these read VNGG…CILL, FDLL…LMWW, LGLL…NAVF, LSME…MVYL, VLLL…AAIM, ASTI…YYVN, and VIGD…FFGY. The region spanning 388 to 594 is the ABC transmembrane type-2 domain; the sequence is SQLCILLHRL…CYRLLVAIQY (207 aa).

This sequence belongs to the ABC transporter superfamily. ABCG family. Eye pigment precursor importer (TC 3.A.1.204) subfamily. Mainly expressed in vascular tissues,predominantly in phloem companion cells, with highest levels in roots and seeds, and lower levels in seedlings, stems, leaves and flowers. Mostly observed in inflorescence meristems relative to cauline leaves and developing siliques. In seeds, mainly expressed in the endosperm and, to a lesser extent, in the embryo.

Its subcellular location is the cell membrane. The catalysed reaction is abscisate(in) + ATP + H2O = abscisate(out) + ADP + phosphate + H(+). With respect to regulation, ADP and vanadate (ABC transporters inhibitor) inhibit the ATP-dependent abscisic acid (ABA) uptake. High affinity abscisic acid (ABA) transporter that mediates the export of ABA, with a preference for (+)-ABA, through the plasma membrane, especially in vascular tissues (e.g. phloem companion cells), and is involved in the intercellular ABA signaling pathway. Together with ABCG31, export ABA from the endosperm to deliver it to the embryo via ABCG30 and ABCG40-mediated import to suppress radicle extension and subsequent embryonic growth. This chain is ABC transporter G family member 25, found in Arabidopsis thaliana (Mouse-ear cress).